A 1202-amino-acid polypeptide reads, in one-letter code: Inner capsid protein VP3 (1202 aa).

2 disordered regions span residues 1 to 45 and 73 to 99; these read MRPI…SGKI and YTSKDSVQHGGSSITYTSNTTGNPRVT. Basic and acidic residues predominate over residues 10–21; it reads NQERTTTKHQET. The span at 27–45 shows a compositional bias: polar residues; the sequence is NEQTTSDQRFTRSSNSGKI.

It belongs to the turreted BTV-fold inner capsid family. Homodecamer; each decamer is made up of two conformers of VP2, called VP2A and VP2B. 12 homodecamers assemble to form an icosahedral capsid.

It localises to the virion. Inner capsid protein that self-assembles to form an icosahedral capsid with a T=2 symmetry, which consists of 120 copies of VP2, with channels at each of its five-fold vertices. This capsid constitutes the innermost concentric layer of the viral mature particle. The polypeptide is Inner capsid protein VP3 (S3) (Aedes pseudoscutellaris reovirus (isolate France) (ApRV)).